The following is a 136-amino-acid chain: Histone H3, embryonic (136 aa).

The interval 1-43 (MARTKQTARKSTGGKAPRKQLATKAARKSAPATGGVKKPHRYR) is disordered. Lysine 5 is subject to N6-methylated lysine. An N6-acetyllysine; alternate modification is found at lysine 10. Residue lysine 10 is modified to N6-methylated lysine; alternate. A Phosphoserine modification is found at serine 11. Lysine 15 and lysine 24 each carry N6-acetyllysine. N6-methylated lysine occurs at positions 28, 37, and 80.

It belongs to the histone H3 family. The nucleosome is a histone octamer containing two molecules each of H2A, H2B, H3 and H4 assembled in one H3-H4 heterotetramer and two H2A-H2B heterodimers. The octamer wraps approximately 147 bp of DNA. Post-translationally, acetylation is generally linked to gene activation. In terms of processing, methylation at Lys-5 is linked to gene activation. Methylation at Lys-10 is linked to gene repression.

Its subcellular location is the nucleus. It is found in the chromosome. Functionally, core component of nucleosome. Nucleosomes wrap and compact DNA into chromatin, limiting DNA accessibility to the cellular machineries which require DNA as a template. Histones thereby play a central role in transcription regulation, DNA repair, DNA replication and chromosomal stability. DNA accessibility is regulated via a complex set of post-translational modifications of histones, also called histone code, and nucleosome remodeling. The sequence is that of Histone H3, embryonic from Paracentrotus lividus (Common sea urchin).